The chain runs to 317 residues: tRNA dimethylallyltransferase (317 aa).

14 to 21 contributes to the ATP binding site; that stretch reads GPTASGKS. Substrate is bound at residue 16-21; that stretch reads TASGKS. Interaction with substrate tRNA stretches follow at residues 39-42 and 163-167; these read DSVL and QRIQR.

Belongs to the IPP transferase family. Monomer. Mg(2+) is required as a cofactor.

It catalyses the reaction adenosine(37) in tRNA + dimethylallyl diphosphate = N(6)-dimethylallyladenosine(37) in tRNA + diphosphate. In terms of biological role, catalyzes the transfer of a dimethylallyl group onto the adenine at position 37 in tRNAs that read codons beginning with uridine, leading to the formation of N6-(dimethylallyl)adenosine (i(6)A). This is tRNA dimethylallyltransferase from Xylella fastidiosa (strain M12).